A 255-amino-acid polypeptide reads, in one-letter code: Taurine import ATP-binding protein TauB (255 aa).

The ABC transporter domain maps to 2 to 229 (LQISHLYADY…RFVAGESSRS (228 aa)). An ATP-binding site is contributed by 34 to 41 (GPSGCGKT).

This sequence belongs to the ABC transporter superfamily. Taurine importer (TC 3.A.1.17.1) family. In terms of assembly, the complex is composed of two ATP-binding proteins (TauB), two transmembrane proteins (TauC) and a solute-binding protein (TauA).

It localises to the cell inner membrane. It catalyses the reaction taurine(out) + ATP + H2O = taurine(in) + ADP + phosphate + H(+). Its function is as follows. Part of the ABC transporter complex TauABC involved in taurine import. Responsible for energy coupling to the transport system. This is Taurine import ATP-binding protein TauB from Escherichia coli (strain K12).